The chain runs to 196 residues: Nucleoside triphosphate pyrophosphatase (196 aa).

D73 (proton acceptor) is an active-site residue.

It belongs to the Maf family. Requires a divalent metal cation as cofactor.

Its subcellular location is the cytoplasm. The catalysed reaction is a ribonucleoside 5'-triphosphate + H2O = a ribonucleoside 5'-phosphate + diphosphate + H(+). It carries out the reaction a 2'-deoxyribonucleoside 5'-triphosphate + H2O = a 2'-deoxyribonucleoside 5'-phosphate + diphosphate + H(+). Functionally, nucleoside triphosphate pyrophosphatase. May have a dual role in cell division arrest and in preventing the incorporation of modified nucleotides into cellular nucleic acids. The polypeptide is Nucleoside triphosphate pyrophosphatase (Chlamydia pneumoniae (Chlamydophila pneumoniae)).